The primary structure comprises 482 residues: Butyrophilin-like protein 2 (482 aa).

Over 1–6 (MVDFPG) the chain is Cytoplasmic. A helical; Signal-anchor for type II membrane protein transmembrane segment spans residues 7–23 (YNLSGAVASFLFILLTM). The Extracellular segment spans residues 24–482 (KQSEDFRVIG…VAVGLPRKRS (459 aa)). Ig-like V-type domains are found at residues 29 to 140 (FRVI…LLLK), 142 to 234 (AGLG…SVIS), and 236 to 355 (PEKL…ASLD). 3 disulfides stabilise this stretch: Cys-50/Cys-124, Cys-164/Cys-218, and Cys-267/Cys-341. Asn-210 carries an N-linked (GlcNAc...) asparagine glycan. Residue Asn-427 is glycosylated (N-linked (GlcNAc...) asparagine).

This sequence belongs to the immunoglobulin superfamily. BTN/MOG family. Expressed in brain, heart, kidney, liver, pancreas, ovary, leukocyte, small intestine, testis and thymus.

It is found in the membrane. Functionally, negative regulator of T-cell proliferation. In Homo sapiens (Human), this protein is Butyrophilin-like protein 2.